A 201-amino-acid polypeptide reads, in one-letter code: Cytochrome c oxidase assembly protein CtaG (201 aa).

At 1–13 (MTDQGENEKKQRR) the chain is on the cytoplasmic side. The helical; Signal-anchor for type II membrane protein transmembrane segment at 14 to 36 (SNATIAVACLSFFVCMIGAAYAS) threads the bilayer. Over 37–201 (VPLYRIFCQV…KAVGSTRNGG (165 aa)) the chain is Periplasmic.

Belongs to the COX11/CtaG family.

It is found in the cell inner membrane. Its function is as follows. Exerts its effect at some terminal stage of cytochrome c oxidase synthesis, probably by being involved in the insertion of the copper B into subunit I. This chain is Cytochrome c oxidase assembly protein CtaG, found in Brucella suis (strain ATCC 23445 / NCTC 10510).